The sequence spans 230 residues: uncharacterized protein (230 aa).

An HTH gntR-type domain is found at 12-80 (KNLSYVLAEK…PRIGTRVMPQ (69 aa)). Residues 40-59 (EIELGEQFGVSRTAVREAVK) constitute a DNA-binding region (H-T-H motif).

This is an uncharacterized protein from Escherichia coli (strain K12).